Consider the following 379-residue polypeptide: MKHLSIFGSTGSIGQQTLKIVRSLPHLFNVVALASYGNNKDLFIEQIREFSPSIVSVYDEQLYFEIRKEFPEIQAFLREEGLMAAATAEEIDMVVAASSGVVALPAIIEAMKSGKVLALANKEVLVSAGEIIKEFAKQYQTEIFPVDSEHNALYQCLEGRNALEVKKLLLTASGGPLLHKTKEELAHVTVQDVLKHPIWHMGAKITVDSSTLVNKGLEIIEAYWLFGLENAEIDAVIHPQSLIHGMVEFLDGTVLSVMNPPNMLFPIQHVLTTPKRYPAPHKGINFSIKQTLEFFPIDEERFPSIGLARQVLKNKGSSGPFFNAANEVLVQRFLAEEIAWCDILDKLTRLMENYRVFACTSLEDVLAVDEEARALAQEI.

Thr10, Gly11, Ser12, Ile13, Asn39, and Asn121 together coordinate NADPH. A 1-deoxy-D-xylulose 5-phosphate-binding site is contributed by Lys122. Glu123 is a binding site for NADPH. Asp147 contributes to the Mn(2+) binding site. Ser148, Glu149, Ser173, and His196 together coordinate 1-deoxy-D-xylulose 5-phosphate. Mn(2+) is bound at residue Glu149. Position 202 (Gly202) interacts with NADPH. 1-deoxy-D-xylulose 5-phosphate-binding residues include Ser209, Asn214, Lys215, and Glu218. Mn(2+) is bound at residue Glu218.

It belongs to the DXR family. Requires Mg(2+) as cofactor. Mn(2+) serves as cofactor.

It catalyses the reaction 2-C-methyl-D-erythritol 4-phosphate + NADP(+) = 1-deoxy-D-xylulose 5-phosphate + NADPH + H(+). It participates in isoprenoid biosynthesis; isopentenyl diphosphate biosynthesis via DXP pathway; isopentenyl diphosphate from 1-deoxy-D-xylulose 5-phosphate: step 1/6. Catalyzes the NADPH-dependent rearrangement and reduction of 1-deoxy-D-xylulose-5-phosphate (DXP) to 2-C-methyl-D-erythritol 4-phosphate (MEP). The polypeptide is 1-deoxy-D-xylulose 5-phosphate reductoisomerase (Chlamydia felis (strain Fe/C-56) (Chlamydophila felis)).